A 432-amino-acid chain; its full sequence is uncharacterized protein (432 aa).

Disordered stretches follow at residues 37 to 61, 127 to 151, and 298 to 378; these read DGIG…SADC, RDHD…DTRY, and SVSS…NHQC. The segment covering 312 to 335 has biased composition (polar residues); sequence DSSTLANTQGFREDQSQQQHTPSP. The segment covering 341-366 has biased composition (low complexity); that stretch reads SSLSHQFHQSIHQSHQHHQSIYQSQH.

This is an uncharacterized protein from Arabidopsis thaliana (Mouse-ear cress).